Consider the following 147-residue polypeptide: UPF0208 membrane protein CGSHiEE_06015 (147 aa).

2 consecutive transmembrane segments (helical) span residues 38–58 (FAQK…QIYA) and 67–87 (IAIL…YWLG).

Belongs to the UPF0208 family.

The protein localises to the cell inner membrane. This Haemophilus influenzae (strain PittEE) protein is UPF0208 membrane protein CGSHiEE_06015.